The following is a 417-amino-acid chain: Dibenzothiophene monooxygenase (417 aa).

The helical N-terminus stretch occupies residues 19–125 (DPVAVARGLA…LYTQIAQNNW (107 aa)). FMN is bound by residues Tyr-96, 129-134 (NASSEN), 159-163 (KHFCS), Arg-282, 369-370 (AR), and His-391. The interval 126–234 (WTGNASSENN…VEPDEVLGAP (109 aa)) is central beta-barrel N-terminus. Residues 131-142 (SSENNSHELDVK) form a lid loop region. The tract at residues 235–409 (NAFVLAFIQS…DVGKHTLNGQ (175 aa)) is helical C-terminus.

It belongs to the DszC flavin monooxygenase family. As to quaternary structure, homotetramer.

It localises to the cytoplasm. It carries out the reaction dibenzothiophene + 2 FMNH2 + 2 O2 = dibenzothiophene 5,5-dioxide + 2 FMN + 2 H2O + 2 H(+). The catalysed reaction is dibenzothiophene + FMNH2 + O2 = dibenzothiophene 5-oxide + FMN + H2O + H(+). It catalyses the reaction dibenzothiophene 5-oxide + FMNH2 + O2 = dibenzothiophene 5,5-dioxide + FMN + H2O + H(+). The protein operates within sulfur metabolism; dibenzothiophene degradation. In terms of biological role, catalyzes the first step of the '4S' desulfurization pathway that removes covalently bound sulfur from dibenzothiophene (DBT) without breaking carbon-carbon bonds. Sulfur dioxygenase which converts DBT to DBT-sulfone (DBTO2 or DBT 5,5-dioxide) in a stepwise manner. This chain is Dibenzothiophene monooxygenase, found in Rhodococcus erythropolis (Arthrobacter picolinophilus).